Here is a 259-residue protein sequence, read N- to C-terminus: Small ribosomal subunit protein uS2 (259 aa).

Belongs to the universal ribosomal protein uS2 family.

This chain is Small ribosomal subunit protein uS2, found in Streptococcus pneumoniae serotype 4 (strain ATCC BAA-334 / TIGR4).